A 287-amino-acid polypeptide reads, in one-letter code: Fructose-bisphosphate aldolase (287 aa).

Ser-50 is a D-glyceraldehyde 3-phosphate binding site. Asp-85 functions as the Proton donor in the catalytic mechanism. Zn(2+) contacts are provided by His-86, Asp-107, Glu-137, and His-181. Gly-182 contributes to the dihydroxyacetone phosphate binding site. Residue His-209 coordinates Zn(2+). Dihydroxyacetone phosphate-binding positions include 210-212 (GGT) and 231-234 (NVNT). Residues Thr-212 and Thr-234 each carry the phosphothreonine modification.

Belongs to the class II fructose-bisphosphate aldolase family. Requires Zn(2+) as cofactor.

The catalysed reaction is beta-D-fructose 1,6-bisphosphate = D-glyceraldehyde 3-phosphate + dihydroxyacetone phosphate. It participates in carbohydrate degradation; glycolysis; D-glyceraldehyde 3-phosphate and glycerone phosphate from D-glucose: step 4/4. In terms of biological role, catalyzes the aldol condensation of dihydroxyacetone phosphate (DHAP or glycerone-phosphate) with glyceraldehyde 3-phosphate (G3P) to form fructose 1,6-bisphosphate (FBP) in gluconeogenesis and the reverse reaction in glycolysis. The sequence is that of Fructose-bisphosphate aldolase (fba) from Geobacillus stearothermophilus (Bacillus stearothermophilus).